The sequence spans 815 residues: Protein SMAX1-LIKE 3 (815 aa).

The 164-residue stretch at 8-171 (VEQALTADAA…TKVEQAVSLE (164 aa)) folds into the Clp R domain. Repeat stretches follow at residues 12 to 80 (LTAD…LNRL) and 99 to 171 (ISNA…VSLE). A disordered region spans residues 750–769 (SRACSPPSNQKSDGSDQPED). The EAR signature appears at 778 to 782 (LDLNL).

It belongs to the ClpA/ClpB family. In terms of assembly, interacts probably with TPL/TPR in an EAR-motif dependent manner. Expressed in roots and seedlings.

In terms of biological role, may function in a transcriptional corepressor complex. The polypeptide is Protein SMAX1-LIKE 3 (Arabidopsis thaliana (Mouse-ear cress)).